A 79-amino-acid polypeptide reads, in one-letter code: Polcalcin Bra r 1 (79 aa).

EF-hand domains are found at residues 1-36 (MADA…LGSV) and 39-71 (DDVT…NPGL). D14, D16, D18, K20, E25, D49, D51, D53, N55, and E60 together coordinate Ca(2+).

In Brassica campestris (Field mustard), this protein is Polcalcin Bra r 1.